The sequence spans 507 residues: Protein disulfide-isomerase (507 aa).

A signal peptide spans 1-20 (MASMVSFCFLLLFLAFFASS). The Thioredoxin 1 domain occupies 21–144 (FNEIYAEESE…IVDYLKKQSG (124 aa)). Catalysis depends on nucleophile residues Cys62 and Cys65. A disulfide bridge links Cys62 with Cys65. Residues Asn181 and Asn278 are each glycosylated (N-linked (GlcNAc...) asparagine). In terms of domain architecture, Thioredoxin 2 spans 365-485 (YRKSEPIPEH…FIEFIEKNRE (121 aa)). Catalysis depends on nucleophile residues Cys407 and Cys410. An intrachain disulfide couples Cys407 to Cys410. A disordered region spans residues 484–507 (REKSSKKESIVKDDQTDSETKAEL). The Prevents secretion from ER signature appears at 504 to 507 (KAEL).

The protein belongs to the protein disulfide isomerase family.

Its subcellular location is the endoplasmic reticulum lumen. The catalysed reaction is Catalyzes the rearrangement of -S-S- bonds in proteins.. Its function is as follows. Participates in the folding of proteins containing disulfide bonds, may be involved in glycosylation, prolyl hydroxylation and triglyceride transfer. The protein is Protein disulfide-isomerase (PDI) of Datisca glomerata (Durango root).